Here is a 29-residue protein sequence, read N- to C-terminus: uncharacterized protein (29 aa).

Residues 8–28 (FALIVVLFILLIIVGTAFVGG) traverse the membrane as a helical segment.

This sequence belongs to the SscA family.

The protein resides in the membrane. This is an uncharacterized protein from Bacillus subtilis (strain 168).